The sequence spans 237 residues: C-type lectin domain family 4 member A (237 aa).

At 1–48 the chain is on the cytoplasmic side; that stretch reads MTSEITYAEVRFKNEFKSSGINTASSAASKERTAPHKSNTGFPKLLCA. An ITIM motif motif is present at residues 5-10; sequence ITYAEV. A helical; Signal-anchor for type II membrane protein membrane pass occupies residues 49 to 69; the sequence is SLLIFFLLLAISFFIAFVIFF. At 70-237 the chain is on the extracellular side; the sequence is QKYSQLLEKK…SVCEMMKIHL (168 aa). 3 disulfides stabilise this stretch: Cys-106–Cys-117, Cys-134–Cys-230, and Cys-203–Cys-222. Positions 113–231 constitute a C-type lectin domain; sequence FSSNCYFIST…CLGPQRSVCE (119 aa). The Ca(2+) site is built by Val-143, Asn-145, and Glu-149. Asn-185 carries N-linked (GlcNAc...) asparagine glycosylation. Glu-195, Ser-197, and Glu-201 together coordinate Ca(2+). Residues 195–197 and Glu-201 each bind alpha-D-mannopyranose; that span reads EPS. 207-209 lines the N-acetyl-D-glucosamine pocket; sequence NFR. Ca(2+)-binding residues include Asn-218, Asp-219, and Glu-231.

In terms of assembly, may interact with PTPN6 via its ITIM motif. Expressed preferentially in hematopoietic tissues. Expressed in all circulating Ag-presenting cells such as dendritic cells, myeloid cells, monocytes, macrophages, B-cells and epidermal Langerhans cells (at protein level). Expressed in peripheral blood leukocytes, neutrophils, moderate quantities in spleen, lymph node, and bone marrow, and at very low levels in thymus.

The protein resides in the cell membrane. In terms of biological role, C-type lectin receptor that binds carbohydrates mannose and fucose but also weakly interacts with N-acetylglucosamine (GlcNAc) in a Ca(2+)-dependent manner. Involved in regulating immune reactivity. Once triggered by antigen, it is internalized by clathrin-dependent endocytosis and delivers its antigenic cargo into the antigen presentation pathway resulting in cross-priming of CD8(+) T cells. This cross-presentation and cross-priming are enhanced by TLR7 and TLR8 agonists with increased expansion of the CD8(+) T cells, high production of IFNG and TNF with reduced levels of IL4, IL5 and IL13. In plasmacytoid dendritic cells, inhibits TLR9-mediated IFNA and TNF production. May be involved via its ITIM motif (immunoreceptor tyrosine-based inhibitory motifs) in the inhibition of B-cell-receptor-mediated calcium mobilization and protein tyrosine phosphorylation. (Microbial infection) Involved in the interaction between HIV-1 virus and dendritic cells. Enhances HIV-1 binding/entry and virus infection. Requires ITIM motif-associated signal transduction pathway involving phosphatases PTPN6 and PTPN11, SYK, Src kinases and MAP kinases. This chain is C-type lectin domain family 4 member A, found in Homo sapiens (Human).